Here is a 351-residue protein sequence, read N- to C-terminus: UDP-3-O-acylglucosamine N-acyltransferase (351 aa).

The Proton acceptor role is filled by H257.

Belongs to the transferase hexapeptide repeat family. LpxD subfamily. As to quaternary structure, homotrimer.

The catalysed reaction is a UDP-3-O-[(3R)-3-hydroxyacyl]-alpha-D-glucosamine + a (3R)-hydroxyacyl-[ACP] = a UDP-2-N,3-O-bis[(3R)-3-hydroxyacyl]-alpha-D-glucosamine + holo-[ACP] + H(+). Its pathway is bacterial outer membrane biogenesis; LPS lipid A biosynthesis. In terms of biological role, catalyzes the N-acylation of UDP-3-O-acylglucosamine using 3-hydroxyacyl-ACP as the acyl donor. Is involved in the biosynthesis of lipid A, a phosphorylated glycolipid that anchors the lipopolysaccharide to the outer membrane of the cell. The chain is UDP-3-O-acylglucosamine N-acyltransferase from Methylorubrum populi (strain ATCC BAA-705 / NCIMB 13946 / BJ001) (Methylobacterium populi).